The chain runs to 468 residues: Probable protein phosphatase 2C 52 (468 aa).

One can recognise a PPM-type phosphatase domain in the interval 67-372 (SSCIFTQQGR…DDCAVVCLFL (306 aa)). Mn(2+) is bound by residues Asp-102, Gly-103, Asp-317, and Asp-363. The segment covering 413 to 429 (RSSSDQENETYGNVNTE) has biased composition (polar residues). Positions 413–442 (RSSSDQENETYGNVNTETDAEDEKTVGDQN) are disordered.

Belongs to the PP2C family. It depends on Mg(2+) as a cofactor. Mn(2+) is required as a cofactor.

The catalysed reaction is O-phospho-L-seryl-[protein] + H2O = L-seryl-[protein] + phosphate. It catalyses the reaction O-phospho-L-threonyl-[protein] + H2O = L-threonyl-[protein] + phosphate. This chain is Probable protein phosphatase 2C 52, found in Arabidopsis thaliana (Mouse-ear cress).